The primary structure comprises 126 residues: Protein ApaG (126 aa).

The region spanning 2–126 (SALDDSIRVE…FRLALPGLLH (125 aa)) is the ApaG domain.

The sequence is that of Protein ApaG from Shewanella sp. (strain MR-7).